The following is a 481-amino-acid chain: ATP synthase subunit beta, chloroplastic (481 aa).

Residue 162 to 169 (GGAGVGKT) participates in ATP binding.

The protein belongs to the ATPase alpha/beta chains family. As to quaternary structure, F-type ATPases have 2 components, CF(1) - the catalytic core - and CF(0) - the membrane proton channel. CF(1) has five subunits: alpha(3), beta(3), gamma(1), delta(1), epsilon(1). CF(0) has four main subunits: a(1), b(1), b'(1) and c(9-12).

Its subcellular location is the plastid. It is found in the chloroplast thylakoid membrane. It catalyses the reaction ATP + H2O + 4 H(+)(in) = ADP + phosphate + 5 H(+)(out). Produces ATP from ADP in the presence of a proton gradient across the membrane. The catalytic sites are hosted primarily by the beta subunits. In Oltmannsiellopsis viridis (Marine flagellate), this protein is ATP synthase subunit beta, chloroplastic.